Reading from the N-terminus, the 263-residue chain is Polyglutamine-binding protein 1 (263 aa).

Positions 46–80 constitute a WW domain; sequence EGLPPSWYKVFDPSCGLPYYWNVETDLVSWLSPHD. A disordered region spans residues 94 to 263; it reads NSNADAEDKS…AEASRSKQQD (170 aa). Residues 99 to 173 are compositionally biased toward basic and acidic residues; the sequence is AEDKSERNLE…DKADREDGKD (75 aa). The stretch at 104-110 is one 1-1; approximate repeat; that stretch reads ERNLEKV. The tract at residues 104–138 is 5 X 7 AA approximate tandem repeats of D-R-[NS]-H-E-K-S; that stretch reads ERNLEKVDRNHEKSDRSHEKPDRSHEKADRNHEKS. The 1-2 repeat unit spans residues 111-117; sequence DRNHEKS. The stretch at 118 to 124 is one 1-3; approximate repeat; that stretch reads DRSHEKP. The 1-4; approximate repeat unit spans residues 125–131; it reads DRSHEKA. 10 consecutive repeat copies span residues 132-138, 139-140, 141-142, 143-144, 150-151, 152-153, 154-155, 156-157, 158-159, and 160-161. Residues 139 to 144 are 3 X 2 AA tandem repeats of [DE]-R; it reads DRERER. A 6 X 2 AA tandem repeats of [DE]-R region spans residues 150-161; the sequence is DRERDRDRERER. Positions 243–253 are important for interaction with TXNL4A; sequence YPSPGAVLRAN. Residue serine 245 is modified to Phosphoserine.

As to quaternary structure, interacts with POU3F2/Brn-2, ATXN1, TXNL4A, HTT and AR. Interaction with ATXN1 correlates positively with the length of the polyglutamine tract. Interacts with RNA polymerase II large subunit in a phosphorylation-dependent manner. Forms a ternary complex with ATXN1 mutant and phosphorylated RNA polymerase II. Interacts (via C-terminus) with TXNL4A and CD2BP2. Interacts (via WW domain) with ATN1 and SF3B1, and may interact with additional splice factors. Interacts (via WW domain) with WBP11; Leading to reduce interaction between PQBP1 and TXNL4A. Interacts with CAPRIN1. Interacts with DDX1. Interacts with SFPQ. Interacts with KHSRP.

It localises to the nucleus. The protein localises to the nucleus speckle. The protein resides in the cytoplasmic granule. Intrinsically disordered protein that acts as a scaffold, and which is involved in different processes, such as pre-mRNA splicing, transcription regulation, innate immunity and neuron development. Interacts with splicing-related factors via the intrinsically disordered region and regulates alternative splicing of target pre-mRNA species. May suppress the ability of POU3F2 to transactivate the DRD1 gene in a POU3F2 dependent manner. Can activate transcription directly or via association with the transcription machinery. May be involved in ATXN1 mutant-induced cell death. The interaction with ATXN1 mutant reduces levels of phosphorylated RNA polymerase II large subunit. Involved in the assembly of cytoplasmic stress granule, possibly by participating in the transport of neuronal RNA granules. Also acts as an innate immune sensor of infection by retroviruses, by detecting the presence of reverse-transcribed DNA in the cytosol. Directly binds retroviral reverse-transcribed DNA in the cytosol and interacts with CGAS, leading to activate the cGAS-STING signaling pathway, triggering type-I interferon production. The sequence is that of Polyglutamine-binding protein 1 (Pqbp1) from Rattus norvegicus (Rat).